Here is a 376-residue protein sequence, read N- to C-terminus: 1-acyl-sn-glycerol-3-phosphate acyltransferase gamma (376 aa).

The Cytoplasmic segment spans residues methionine 1–lysine 124. The HXXXXD motif signature appears at histidine 96–aspartate 101. A helical membrane pass occupies residues glutamate 125–lysine 145. The Lumenal portion of the chain corresponds to arginine 146–threonine 316. Residues isoleucine 317–leucine 339 form a helical membrane-spanning segment. Over threonine 340–glutamate 376 the chain is Cytoplasmic.

This sequence belongs to the 1-acyl-sn-glycerol-3-phosphate acyltransferase family.

Its subcellular location is the endoplasmic reticulum membrane. The protein resides in the nucleus envelope. It catalyses the reaction a 1-acyl-sn-glycero-3-phosphate + an acyl-CoA = a 1,2-diacyl-sn-glycero-3-phosphate + CoA. The catalysed reaction is pentadecanoyl-CoA + 1-(9Z-octadecenoyl)-sn-glycero-3-phosphate = 1-(9Z)-octadecenoyl-2-pentadecanoyl-sn-glycero-3-phosphate + CoA. The enzyme catalyses heptadecanoyl-CoA + 1-(9Z-octadecenoyl)-sn-glycero-3-phosphate = 1-(9Z)-octadecenoyl-2-heptadecanoyl-sn-glycero-3-phosphate + CoA. It carries out the reaction 1-(9Z-octadecenoyl)-sn-glycero-3-phosphate + octadecanoyl-CoA = 1-(9Z-octadecenoyl)-2-octadecanoyl-sn-glycero-3-phosphate + CoA. It catalyses the reaction nonadecanoyl-CoA + 1-(9Z-octadecenoyl)-sn-glycero-3-phosphate = 1-(9Z)-octadecenoyl-2-nonadecanoyl-sn-glycero-3-phosphate + CoA. The catalysed reaction is 1-(9Z-octadecenoyl)-sn-glycero-3-phosphate + (5Z,8Z,11Z,14Z)-eicosatetraenoyl-CoA = 1-(9Z)-octadecenoyl-2-(5Z,8Z,11Z,14Z)-eicosatetraenoyl-sn-glycero-3-phosphate + CoA. The enzyme catalyses 1-(9Z-octadecenoyl)-sn-glycero-3-phosphate + (9Z)-octadecenoyl-CoA = 1,2-di-(9Z-octadecenoyl)-sn-glycero-3-phosphate + CoA. It carries out the reaction 1-(9Z-octadecenoyl)-sn-glycero-3-phosphate + (9Z,12Z)-octadecadienoyl-CoA = 1-(9Z)-octadecenoyl-2-(9Z,12Z)-octadecadienoyl-sn-glycero-3-phosphate + CoA. It catalyses the reaction 1-(9Z-octadecenoyl)-sn-glycero-3-phosphocholine + (5Z,8Z,11Z,14Z)-eicosatetraenoyl-CoA = 1-(9Z)-octadecenoyl-2-(5Z,8Z,11Z,14Z)-icosatetraenoyl-sn-glycero-3-phosphocholine + CoA. The catalysed reaction is 1-(9Z-octadecenoyl)-sn-glycero-3-phospho-(1D-myo-inositol) + (5Z,8Z,11Z,14Z)-eicosatetraenoyl-CoA = 1-(9Z-octadecenoyl)-2-(5Z,8Z,11Z,14Z-eicosatetraenoyl)-sn-glycero-3-phospho-1D-myo-inositol + CoA. The enzyme catalyses 1-(9Z-octadecenoyl)-sn-glycero-3-phospho-L-serine + (5Z,8Z,11Z,14Z)-eicosatetraenoyl-CoA = 1-(9Z-octadecenoyl)-2-(5Z,8Z,11Z,14Z-eicosatetraenoyl)-sn-glycero-3-phospho-L-serine + CoA. It carries out the reaction 1-hexadecanoyl-sn-glycero-3-phosphate + (9Z)-octadecenoyl-CoA = 1-hexadecanoyl-2-(9Z-octadecenoyl)-sn-glycero-3-phosphate + CoA. It catalyses the reaction 1-hexadecanoyl-sn-glycero-3-phosphate + (5Z,8Z,11Z,14Z)-eicosatetraenoyl-CoA = 1-hexadecanoyl-2-(5Z,8Z,11Z,14Z-eicosatetraenoyl)-sn-glycero-3-phosphate + CoA. The catalysed reaction is 1-heptadecanoyl-sn-glycero-3-phosphate + (5Z,8Z,11Z,14Z)-eicosatetraenoyl-CoA = 1-heptadecanoyl-2-(5Z,8Z,11Z,14Z)-eicosatetraenoyl-sn-glycero-3-phosphate + CoA. The enzyme catalyses 1-octadecanoyl-sn-glycero-3-phosphate + (9Z)-octadecenoyl-CoA = 1-octadecanoyl-2-(9Z-octadecenoyl)-sn-glycero-3-phosphate + CoA. It carries out the reaction 1-octadecanoyl-sn-glycero-3-phosphate + (5Z,8Z,11Z,14Z)-eicosatetraenoyl-CoA = 1-octadecanoyl-2-(5Z,8Z,11Z,14Z-eicosatetraenoyl)-sn-glycero-3-phosphate + CoA. It catalyses the reaction 1-(9Z-octadecenoyl)-sn-glycero-3-phosphate + hexadecanoyl-CoA = 1-hexadecanoyl-2-(9Z-octadecenoyl)-sn-glycero-3-phosphate + CoA. The catalysed reaction is 1-O-(9Z-octadecenyl)-sn-glycero-3-phosphate + (5Z,8Z,11Z,14Z)-eicosatetraenoyl-CoA = 1-O-(9Z-octadecenyl)-2-(5Z,8Z,11Z,14Z-eicosatetraenoyl)-sn-glycero-3-phosphate + CoA. The enzyme catalyses a 1-acyl-sn-glycero-3-phospho-(1D-myo-inositol) + (5Z,8Z,11Z,14Z)-eicosatetraenoyl-CoA = a 1-acyl-2-(5Z,8Z,11Z,14Z-eicosatetraenoyl)-sn-glycero-3-phospho-(1D-myo-inositol) + CoA. It functions in the pathway phospholipid metabolism; CDP-diacylglycerol biosynthesis; CDP-diacylglycerol from sn-glycerol 3-phosphate: step 2/3. Its function is as follows. Converts 1-acyl-sn-glycerol-3-phosphate (lysophosphatidic acid or LPA) into 1,2-diacyl-sn-glycerol-3-phosphate (phosphatidic acid or PA) by incorporating an acyl moiety at the sn-2 position of the glycerol backbone. Acts on LPA containing saturated or unsaturated fatty acids C16:0-C20:4 at the sn-1 position using C18:1, C20:4 or C18:2-CoA as the acyl donor. Also acts on lysophosphatidylcholine, lysophosphatidylinositol and lysophosphatidylserine using C18:1 or C20:4-CoA. Has a preference for arachidonoyl-CoA as a donor. Also has a modest lysophosphatidylinositol acyltransferase (LPIAT) activity, converts lysophosphatidylinositol (LPI) into phosphatidylinositol. In Pongo abelii (Sumatran orangutan), this protein is 1-acyl-sn-glycerol-3-phosphate acyltransferase gamma (AGPAT3).